Reading from the N-terminus, the 135-residue chain is UPF0306 protein C8J_1355 (135 aa).

This sequence belongs to the UPF0306 family.

In Campylobacter jejuni subsp. jejuni serotype O:6 (strain 81116 / NCTC 11828), this protein is UPF0306 protein C8J_1355.